We begin with the raw amino-acid sequence, 138 residues long: Putative pre-16S rRNA nuclease (138 aa).

This sequence belongs to the YqgF nuclease family.

The protein resides in the cytoplasm. Functionally, could be a nuclease involved in processing of the 5'-end of pre-16S rRNA. This Citrobacter koseri (strain ATCC BAA-895 / CDC 4225-83 / SGSC4696) protein is Putative pre-16S rRNA nuclease.